The primary structure comprises 626 residues: Nuclear RNA export factor 2 (626 aa).

Residue Ser34 is modified to Phosphoserine. Residues 124–203 (WFKVTIPYGI…IFVNHSTAPY (80 aa)) form the RRM domain. LRR repeat units lie at residues 271 to 296 (ELLS…EKAP), 297 to 320 (KVKT…VKGL), 321 to 348 (KLEE…AIRD), and 349 to 376 (CFPK…ETMK). Residues 391–541 (LVLQFLQQYY…LCIVNDELFV (151 aa)) form the NTF2 domain. The region spanning 570–625 (QEQQEMVQAFSAQSGMKLEWSQKCLQDNEWNYTRAGQAFTMLQTEGKIPAEAFKQI) is the TAP-C domain.

It belongs to the NXF family. Interacts with NXT1, NXT2, E1B-AP5, the REF proteins and with nucleoporins, Nup62, Nup153 and Nup214. Interacts with LUZP4. As to expression, expressed almost exclusively in testis. Also expressed in several cancers.

The protein resides in the nucleus. The protein localises to the nucleoplasm. It localises to the cytoplasm. Functionally, involved in the export of mRNA from the nucleus to the cytoplasm. The protein is Nuclear RNA export factor 2 (NXF2) of Homo sapiens (Human).